Reading from the N-terminus, the 248-residue chain is Proteasome subunit alpha (248 aa).

A disordered region spans residues 229–248; sequence LLEADGATTEAESSAEEEDE.

It belongs to the peptidase T1A family. In terms of assembly, the 20S proteasome core is composed of 14 alpha and 14 beta subunits that assemble into four stacked heptameric rings, resulting in a barrel-shaped structure. The two inner rings, each composed of seven catalytic beta subunits, are sandwiched by two outer rings, each composed of seven alpha subunits. The catalytic chamber with the active sites is on the inside of the barrel. Has a gated structure, the ends of the cylinder being occluded by the N-termini of the alpha-subunits. Is capped by the proteasome-associated ATPase, ARC.

It is found in the cytoplasm. The protein operates within protein degradation; proteasomal Pup-dependent pathway. With respect to regulation, the formation of the proteasomal ATPase ARC-20S proteasome complex, likely via the docking of the C-termini of ARC into the intersubunit pockets in the alpha-rings, may trigger opening of the gate for substrate entry. Interconversion between the open-gate and close-gate conformations leads to a dynamic regulation of the 20S proteasome proteolysis activity. Functionally, component of the proteasome core, a large protease complex with broad specificity involved in protein degradation. The polypeptide is Proteasome subunit alpha (Streptomyces scabiei (strain 87.22)).